The chain runs to 355 residues: Erythronate-4-phosphate dehydrogenase (355 aa).

Serine 45 and threonine 66 together coordinate substrate. NAD(+) is bound at residue aspartate 146. Arginine 206 is a catalytic residue. NAD(+) is bound at residue aspartate 229. Glutamate 234 is a catalytic residue. The active-site Proton donor is histidine 251. Glycine 254 lines the NAD(+) pocket. Tyrosine 255 serves as a coordination point for substrate.

It belongs to the D-isomer specific 2-hydroxyacid dehydrogenase family. PdxB subfamily. Homodimer.

The protein localises to the cytoplasm. It carries out the reaction 4-phospho-D-erythronate + NAD(+) = (R)-3-hydroxy-2-oxo-4-phosphooxybutanoate + NADH + H(+). It functions in the pathway cofactor biosynthesis; pyridoxine 5'-phosphate biosynthesis; pyridoxine 5'-phosphate from D-erythrose 4-phosphate: step 2/5. Catalyzes the oxidation of erythronate-4-phosphate to 3-hydroxy-2-oxo-4-phosphonooxybutanoate. This chain is Erythronate-4-phosphate dehydrogenase, found in Acinetobacter baylyi (strain ATCC 33305 / BD413 / ADP1).